The sequence spans 114 residues: DNA-directed RNA polymerase subunit omega (114 aa).

It belongs to the RNA polymerase subunit omega family. As to quaternary structure, the RNAP catalytic core consists of 2 alpha, 1 beta, 1 beta' and 1 omega subunit. When a sigma factor is associated with the core the holoenzyme is formed, which can initiate transcription.

It catalyses the reaction RNA(n) + a ribonucleoside 5'-triphosphate = RNA(n+1) + diphosphate. Its function is as follows. Promotes RNA polymerase assembly. Latches the N- and C-terminal regions of the beta' subunit thereby facilitating its interaction with the beta and alpha subunits. The polypeptide is DNA-directed RNA polymerase subunit omega (Novosphingobium aromaticivorans (strain ATCC 700278 / DSM 12444 / CCUG 56034 / CIP 105152 / NBRC 16084 / F199)).